The chain runs to 708 residues: Fatty acid oxidation complex subunit alpha (708 aa).

The tract at residues 1–190 is enoyl-CoA hydratase; that stretch reads MDMEKTFNLT…KMGLVDDAVP (190 aa). The tract at residues 310–708 is 3-hydroxyacyl-CoA dehydrogenase; the sequence is QKVNKVMVLG…MAEEGTRFFS (399 aa).

The protein in the N-terminal section; belongs to the enoyl-CoA hydratase/isomerase family. This sequence in the central section; belongs to the 3-hydroxyacyl-CoA dehydrogenase family. As to quaternary structure, heterotetramer of two alpha chains (FadJ) and two beta chains (FadI).

Its subcellular location is the cytoplasm. It carries out the reaction a (3S)-3-hydroxyacyl-CoA = a (2E)-enoyl-CoA + H2O. It catalyses the reaction a 4-saturated-(3S)-3-hydroxyacyl-CoA = a (3E)-enoyl-CoA + H2O. The enzyme catalyses a (3S)-3-hydroxyacyl-CoA + NAD(+) = a 3-oxoacyl-CoA + NADH + H(+). The catalysed reaction is (3S)-3-hydroxybutanoyl-CoA = (3R)-3-hydroxybutanoyl-CoA. The protein operates within lipid metabolism; fatty acid beta-oxidation. Its function is as follows. Catalyzes the formation of a hydroxyacyl-CoA by addition of water on enoyl-CoA. Also exhibits 3-hydroxyacyl-CoA epimerase and 3-hydroxyacyl-CoA dehydrogenase activities. This is Fatty acid oxidation complex subunit alpha from Shewanella halifaxensis (strain HAW-EB4).